The sequence spans 702 residues: Polyribonucleotide nucleotidyltransferase (702 aa).

Mg(2+)-binding residues include Asp-485 and Asp-491. The KH domain occupies 552–611 (PKTSTLQIDPEKIRDVIGAGGKVINKIIADTGVKIDIKEDGLVYVSSAESEGVKEAVKII). The 69-residue stretch at 621–689 (GEIYLGKVTK…SQGRINLSRK (69 aa)) folds into the S1 motif domain.

This sequence belongs to the polyribonucleotide nucleotidyltransferase family. It depends on Mg(2+) as a cofactor.

The protein localises to the cytoplasm. It catalyses the reaction RNA(n+1) + phosphate = RNA(n) + a ribonucleoside 5'-diphosphate. Involved in mRNA degradation. Catalyzes the phosphorolysis of single-stranded polyribonucleotides processively in the 3'- to 5'-direction. This is Polyribonucleotide nucleotidyltransferase from Clostridium perfringens (strain 13 / Type A).